Consider the following 70-residue polypeptide: U2-agatoxin-Ao1j (70 aa).

Residues 1 to 20 (MRAIISLLLISAMVFSMIAA) form the signal peptide. The propeptide occupies 21–34 (VPEEEGLQLSEDER). Intrachain disulfides connect cysteine 37/cysteine 53, cysteine 44/cysteine 58, and cysteine 52/cysteine 68. Leucine 69 carries the post-translational modification Leucine amide.

Belongs to the neurotoxin 01 (U2-agtx) family. As to expression, expressed by the venom gland.

It localises to the secreted. Insect active toxin causing rapid but reversible paralysis in crickets. No activity shown in mammals. Does not show effect on mammalian voltage-gated calcium channels. The polypeptide is U2-agatoxin-Ao1j (Agelena orientalis (Funnel-web spider)).